Reading from the N-terminus, the 288-residue chain is Protein-S-isoprenylcysteine O-methyltransferase (288 aa).

The helical transmembrane segment at 13-29 (SIVSFTLGASVISLPLL) threads the bilayer. The Lumenal portion of the chain corresponds to 30–45 (TSSFTEQTLLAAAPGR). The helical transmembrane segment at 46 to 63 (IALVFFIAALNGLLLLLY) threads the bilayer. Residues 64 to 73 (KAQLYQVAIR) are Cytoplasmic-facing. Residues 74 to 91 (ASFLGFAFGCGLLLSITQ) form a helical membrane-spanning segment. The Lumenal segment spans residues 92-96 (SPWKP). The helical transmembrane segment at 97–116 (FGWYVCSLSFFHYSEYLVTA) threads the bilayer. The Cytoplasmic portion of the chain corresponds to 117-135 (MNNPRSLSIDSFLLNHSLE). Residues 136–153 (YTLAALSSWVEFTIETTI) traverse the membrane as a helical segment. The Lumenal segment spans residues 154–158 (YPDLK). Residues 159–178 (QITWLSVIGLIMVLFGEVLR) traverse the membrane as a helical segment. Over 179-216 (KCAMLTAGSNFNHIVQNEKSDSHTLVTSGVYSWFRHPS) the chain is Cytoplasmic. S-adenosyl-L-methionine is bound by residues Q194, 201 to 204 (HTLV), Y209, and 214 to 217 (HPSY). A helical transmembrane segment spans residues 217–232 (YVGWFYWSIGTQVLLC). N233 is a topological domain (lumenal). The helical transmembrane segment at 234 to 248 (PLCLVGYTLASWRFF) threads the bilayer. The Cytoplasmic segment spans residues 249–288 (SERIEEEEFSLIHFFGENYLEYKKKVPTGLPFIKGVKMEP). A substrate-binding site is contributed by R251. E255 contributes to the S-adenosyl-L-methionine binding site.

Belongs to the class VI-like SAM-binding methyltransferase superfamily. Isoprenylcysteine carboxyl methyltransferase family.

The protein resides in the endoplasmic reticulum membrane. The enzyme catalyses [protein]-C-terminal S-[(2E,6E)-farnesyl]-L-cysteine + S-adenosyl-L-methionine = [protein]-C-terminal S-[(2E,6E)-farnesyl]-L-cysteine methyl ester + S-adenosyl-L-homocysteine. Its function is as follows. Catalyzes the post-translational methylation of isoprenylated C-terminal cysteine residues. This Xenopus laevis (African clawed frog) protein is Protein-S-isoprenylcysteine O-methyltransferase (icmt).